A 291-amino-acid chain; its full sequence is 4-diphosphocytidyl-2-C-methyl-D-erythritol kinase (291 aa).

The active site involves Lys21. 104–114 (PMGGGLGGGSS) is an ATP binding site. Residue Asp146 is part of the active site.

This sequence belongs to the GHMP kinase family. IspE subfamily.

The enzyme catalyses 4-CDP-2-C-methyl-D-erythritol + ATP = 4-CDP-2-C-methyl-D-erythritol 2-phosphate + ADP + H(+). It functions in the pathway isoprenoid biosynthesis; isopentenyl diphosphate biosynthesis via DXP pathway; isopentenyl diphosphate from 1-deoxy-D-xylulose 5-phosphate: step 3/6. Catalyzes the phosphorylation of the position 2 hydroxy group of 4-diphosphocytidyl-2C-methyl-D-erythritol. The sequence is that of 4-diphosphocytidyl-2-C-methyl-D-erythritol kinase from Methylococcus capsulatus (strain ATCC 33009 / NCIMB 11132 / Bath).